A 206-amino-acid polypeptide reads, in one-letter code: Uridine kinase (206 aa).

9–16 (GGSGSGKT) is a binding site for ATP.

This sequence belongs to the uridine kinase family.

It is found in the cytoplasm. The enzyme catalyses uridine + ATP = UMP + ADP + H(+). The catalysed reaction is cytidine + ATP = CMP + ADP + H(+). The protein operates within pyrimidine metabolism; CTP biosynthesis via salvage pathway; CTP from cytidine: step 1/3. It functions in the pathway pyrimidine metabolism; UMP biosynthesis via salvage pathway; UMP from uridine: step 1/1. The protein is Uridine kinase of Borrelia duttonii (strain Ly).